Here is a 723-residue protein sequence, read N- to C-terminus: Catalase-peroxidase (723 aa).

The tryptophyl-tyrosyl-methioninium (Trp-Tyr) (with M-252) cross-link spans 98–226 (WHAAGSYRAA…LAAVQMGLIY (129 aa)). Residue His-99 is the Proton acceptor of the active site. The segment at residues 226–252 (YVNPEGVNGKPDPLKTAAQVRETFARM) is a cross-link (tryptophyl-tyrosyl-methioninium (Tyr-Met) (with W-98)). A heme b-binding site is contributed by His-267. Residues 267–286 (HTVGKTHGNGRAENLGPSPE) are disordered.

Belongs to the peroxidase family. Peroxidase/catalase subfamily. As to quaternary structure, homodimer or homotetramer. The cofactor is heme b. Formation of the three residue Trp-Tyr-Met cross-link is important for the catalase, but not the peroxidase activity of the enzyme.

The enzyme catalyses H2O2 + AH2 = A + 2 H2O. It carries out the reaction 2 H2O2 = O2 + 2 H2O. Bifunctional enzyme with both catalase and broad-spectrum peroxidase activity. The chain is Catalase-peroxidase from Thioalkalivibrio sulfidiphilus (strain HL-EbGR7).